Here is a 72-residue protein sequence, read N- to C-terminus: UPF0346 protein GK1571 (72 aa).

It belongs to the UPF0346 family.

This chain is UPF0346 protein GK1571, found in Geobacillus kaustophilus (strain HTA426).